Consider the following 406-residue polypeptide: Purine nucleoside permease (406 aa).

The signal sequence occupies residues methionine 1–alanine 22.

It belongs to the NUP family. In terms of processing, predicted to be a substrate for cleavage by KEX2.

Mammalian nucleoside transport inhibitors dipyridamole and NBMPR inhibit adenosine transport by NUP. In terms of biological role, nucleoside permease that transports adenosine and guanosine. Does not show any transport activities towards cytidine, adenine, guanine, uridine, and uracil. This Candida albicans (strain SC5314 / ATCC MYA-2876) (Yeast) protein is Purine nucleoside permease.